The sequence spans 419 residues: Inositol-tetrakisphosphate 1-kinase (419 aa).

A 1D-myo-inositol 1,3,4-trisphosphate-binding site is contributed by K18. 2 residues coordinate ATP: R106 and K157. The region spanning 117-334 is the ATP-grasp domain; that stretch reads EAYMKDDRIC…TGGAATEEVA (218 aa). Residues H167 and K199 each coordinate 1D-myo-inositol 1,3,4-trisphosphate. ATP contacts are provided by residues 188-199, S214, S232, and S236; that span reads QNFINHNAVLYK. The Mg(2+) site is built by D281, D295, and N297. N297 contributes to the 1D-myo-inositol 1,3,4-trisphosphate binding site. The residue at position 388 (K388) is an N6-acetyllysine; by EP300 and CREBBP. S401 is modified (phosphoserine). K415 bears the N6-acetyllysine; by EP300 and CREBBP mark.

The protein belongs to the ITPK1 family. Monomer. Interacts with GPS1/COPS1. The cofactor is Mg(2+). In terms of processing, acetylation by EP300 and CREBBP destabilizes ITPK1, and down-regulates enzymatic activity. Deacetylated by SIRT1.

It carries out the reaction 1D-myo-inositol 3,4,5,6-tetrakisphosphate + ATP = 1D-myo-inositol 1,3,4,5,6-pentakisphosphate + ADP + H(+). The catalysed reaction is 1D-myo-inositol 1,3,4-trisphosphate + ATP = 1D-myo-inositol 1,3,4,5-tetrakisphosphate + ADP + H(+). The enzyme catalyses 1D-myo-inositol 1,3,4-trisphosphate + ATP = 1D-myo-inositol 1,3,4,6-tetrakisphosphate + ADP + H(+). It catalyses the reaction 1D-myo-inositol 3,4,6-trisphosphate + ATP = 1D-myo-inositol 1,3,4,6-tetrakisphosphate + ADP + H(+). It carries out the reaction 1D-myo-inositol 1,3,4-trisphosphate + 1D-myo-inositol 1,3,4,5,6-pentakisphosphate = 1D-myo-inositol 3,4,5,6-tetrakisphosphate + 1D-myo-inositol 1,3,4,6-tetrakisphosphate. The catalysed reaction is 1D-myo-inositol 1,3,4-trisphosphate + 1D-myo-inositol 1,3,4,5,6-pentakisphosphate = 1D-myo-inositol 3,4,5,6-tetrakisphosphate + 1D-myo-inositol 1,3,4,5-tetrakisphosphate. Its function is as follows. Kinase that can phosphorylate various inositol polyphosphate such as Ins(3,4,5,6)P4 or Ins(1,3,4)P3. Phosphorylates Ins(3,4,5,6)P4 at position 1 to form Ins(1,3,4,5,6)P5. This reaction is thought to have regulatory importance, since Ins(3,4,5,6)P4 is an inhibitor of plasma membrane Ca(2+)-activated Cl(-) channels, while Ins(1,3,4,5,6)P5 is not. Also phosphorylates Ins(1,3,4)P3 on O-5 and O-6 to form Ins(1,3,4,6)P4, an essential molecule in the hexakisphosphate (InsP6) pathway. Also acts as an inositol polyphosphate phosphatase that dephosphorylates Ins(1,3,4,5)P4 and Ins(1,3,4,6)P4 to Ins(1,3,4)P3, and Ins(1,3,4,5,6)P5 to Ins(3,4,5,6)P4. May also act as an isomerase that interconverts the inositol tetrakisphosphate isomers Ins(1,3,4,5)P4 and Ins(1,3,4,6)P4 in the presence of ADP and magnesium. Probably acts as the rate-limiting enzyme of the InsP6 pathway. Modifies TNF-alpha-induced apoptosis by interfering with the activation of TNFRSF1A-associated death domain. Plays an important role in MLKL-mediated necroptosis. Produces highly phosphorylated inositol phosphates such as inositolhexakisphosphate (InsP6) which bind to MLKL mediating the release of an N-terminal auto-inhibitory region leading to its activation. Essential for activated phospho-MLKL to oligomerize and localize to the cell membrane during necroptosis. The chain is Inositol-tetrakisphosphate 1-kinase from Mus musculus (Mouse).